A 503-amino-acid polypeptide reads, in one-letter code: ATP synthase subunit alpha (503 aa).

Position 170–177 (170–177 (GDRKTGKT)) interacts with ATP.

It belongs to the ATPase alpha/beta chains family. As to quaternary structure, F-type ATPases have 2 components, CF(1) - the catalytic core - and CF(0) - the membrane proton channel. CF(1) has five subunits: alpha(3), beta(3), gamma(1), delta(1), epsilon(1). CF(0) has four main subunits: a, b, b' and c.

The protein localises to the cellular thylakoid membrane. The enzyme catalyses ATP + H2O + 4 H(+)(in) = ADP + phosphate + 5 H(+)(out). Produces ATP from ADP in the presence of a proton gradient across the membrane. The alpha chain is a regulatory subunit. The chain is ATP synthase subunit alpha from Gloeothece citriformis (strain PCC 7424) (Cyanothece sp. (strain PCC 7424)).